Reading from the N-terminus, the 182-residue chain is Large ribosomal subunit protein uL5 (182 aa).

The protein belongs to the universal ribosomal protein uL5 family. Part of the 50S ribosomal subunit; part of the 5S rRNA/L5/L18/L25 subcomplex. Contacts the 5S rRNA and the P site tRNA. Forms a bridge to the 30S subunit in the 70S ribosome.

Its function is as follows. This is one of the proteins that bind and probably mediate the attachment of the 5S RNA into the large ribosomal subunit, where it forms part of the central protuberance. In the 70S ribosome it contacts protein S13 of the 30S subunit (bridge B1b), connecting the 2 subunits; this bridge is implicated in subunit movement. Contacts the P site tRNA; the 5S rRNA and some of its associated proteins might help stabilize positioning of ribosome-bound tRNAs. This is Large ribosomal subunit protein uL5 from Trichormus variabilis (strain ATCC 29413 / PCC 7937) (Anabaena variabilis).